Consider the following 46-residue polypeptide: Lantibiotic streptin (46 aa).

Residues 1-24 (MNNTIKDFDLDLKTNKKDTATPYV) constitute a propeptide that is removed on maturation.

Belongs to the type A lantibiotic family. Post-translationally, maturation of lantibiotics involves the enzymatic conversion of Thr, and Ser into dehydrated AA and the formation of thioether bonds with cysteine. This is followed by membrane translocation and cleavage of the modified precursor.

Lanthionine-containing peptide antibiotic (lantibiotic) active on certain Gram-positive bacteria. The bactericidal activity of lantibiotics is based on depolarization of energized bacterial cytoplasmic membranes, initiated by the formation of aqueous transmembrane pores. The polypeptide is Lantibiotic streptin (srtA) (Streptococcus pyogenes serotype M1).